Reading from the N-terminus, the 227-residue chain is Ras-related protein Rab-3C (227 aa).

GTP is bound by residues S39, G42, K43, T44, S45, T56, S57, S61, and T62. Residue T44 participates in Mg(2+) binding. The Switch 1 signature appears at 53–66 (DSFTSAFVSTVGID). Mg(2+) contacts are provided by T62 and D85. At T86 the chain carries Phosphothreonine. The Switch 2 motif lies at 86 to 104 (TAGQERYRTITTAYYRGAM). Residues G88, N143, K144, D146, A174, and K175 each contribute to the GTP site. Residues S196 and S198 each carry the phosphoserine modification. T206 bears the Phosphothreonine mark. Residues C225 and C227 are each lipidated (S-geranylgeranyl cysteine). Position 227 is a cysteine methyl ester (C227).

The protein belongs to the small GTPase superfamily. Rab family. Interacts with RIMS1, RIMS2, RPH3A and RPH3AL. The GTP-bound form interacts with REP15. Interacts with GDI2, CHM and CHML; phosphorylation at Thr-86 disrupts these interactions. Interacts with MADD (via uDENN domain); the GTP-bound form is preferred for interaction. Mg(2+) is required as a cofactor. Phosphorylation of Thr-86 in the switch II region by LRRK2 prevents the association of RAB regulatory proteins, including CHM, CHML and RAB GDP dissociation inhibitor GDI2.

It is found in the cell membrane. It catalyses the reaction GTP + H2O = GDP + phosphate + H(+). Its activity is regulated as follows. Regulated by guanine nucleotide exchange factors (GEFs) which promote the exchange of bound GDP for free GTP. Regulated by GTPase activating proteins (GAPs) which increase the GTP hydrolysis activity. Inhibited by GDP dissociation inhibitors (GDIs) which prevent Rab-GDP dissociation. Its function is as follows. The small GTPases Rab are key regulators of intracellular membrane trafficking, from the formation of transport vesicles to their fusion with membranes. Rabs cycle between an inactive GDP-bound form and an active GTP-bound form that is able to recruit to membranes different sets of downstream effectors directly responsible for vesicle formation, movement, tethering and fusion. The protein is Ras-related protein Rab-3C (RAB3C) of Bos taurus (Bovine).